Consider the following 122-residue polypeptide: Large ribosomal subunit protein uL14 (122 aa).

Belongs to the universal ribosomal protein uL14 family. In terms of assembly, part of the 50S ribosomal subunit. Forms a cluster with proteins L3 and L19. In the 70S ribosome, L14 and L19 interact and together make contacts with the 16S rRNA in bridges B5 and B8.

Binds to 23S rRNA. Forms part of two intersubunit bridges in the 70S ribosome. In Levilactobacillus brevis (strain ATCC 367 / BCRC 12310 / CIP 105137 / JCM 1170 / LMG 11437 / NCIMB 947 / NCTC 947) (Lactobacillus brevis), this protein is Large ribosomal subunit protein uL14.